Reading from the N-terminus, the 322-residue chain is MSGERAKRFPLALEDLKREPRKPEGRVAERQAAGDAARQRLTAAAAVPAAASPIVPERRAPHGGVFAAKPARAKQHAPAAPGAAKRAPQGGAKQGDRSAAPNVALSGALALTSERVRERMVERLRANGVADPRVLAAMSAVPRHMFVDPGLAAQAYEDAALPIGHQQTISKPSVVARMIELAAAGRALERVLEIGTGCGYQAAVLSRVARDVYSIERVKPLYERAKLNLRPLRVPNIRLHYGDGRVGLPAAAPFDAIVIAAAGLDVPRALLEQLAIGGRLVAPVGEQAGEQVLTLVERVAPAQWRESRLDRVFFVPLKSGVI.

Positions 1–101 (MSGERAKRFP…AKQGDRSAAP (101 aa)) are disordered. Over residues 14–29 (EDLKREPRKPEGRVAE) the composition is skewed to basic and acidic residues. Composition is skewed to low complexity over residues 33–51 (AGDAARQRLTAAAAVPAAA) and 76–91 (HAPAAPGAAKRAPQGG). Residue Ser-170 is part of the active site.

Belongs to the methyltransferase superfamily. L-isoaspartyl/D-aspartyl protein methyltransferase family.

The protein localises to the cytoplasm. It carries out the reaction [protein]-L-isoaspartate + S-adenosyl-L-methionine = [protein]-L-isoaspartate alpha-methyl ester + S-adenosyl-L-homocysteine. Its function is as follows. Catalyzes the methyl esterification of L-isoaspartyl residues in peptides and proteins that result from spontaneous decomposition of normal L-aspartyl and L-asparaginyl residues. It plays a role in the repair and/or degradation of damaged proteins. This is Protein-L-isoaspartate O-methyltransferase from Burkholderia pseudomallei (strain 1106a).